Here is a 141-residue protein sequence, read N- to C-terminus: Nucleoside diphosphate kinase (141 aa).

The ATP site is built by lysine 11, phenylalanine 59, arginine 87, threonine 93, arginine 104, and asparagine 114. The active-site Pros-phosphohistidine intermediate is histidine 117.

Belongs to the NDK family. As to quaternary structure, homotetramer. The cofactor is Mg(2+).

The protein resides in the cytoplasm. The catalysed reaction is a 2'-deoxyribonucleoside 5'-diphosphate + ATP = a 2'-deoxyribonucleoside 5'-triphosphate + ADP. The enzyme catalyses a ribonucleoside 5'-diphosphate + ATP = a ribonucleoside 5'-triphosphate + ADP. Its function is as follows. Major role in the synthesis of nucleoside triphosphates other than ATP. The ATP gamma phosphate is transferred to the NDP beta phosphate via a ping-pong mechanism, using a phosphorylated active-site intermediate. The protein is Nucleoside diphosphate kinase of Pseudomonas fluorescens (strain SBW25).